A 200-amino-acid chain; its full sequence is Dephospho-CoA kinase (200 aa).

The DPCK domain maps to 4 to 200; that stretch reads TIGLTGSVAT…TFIERFVKNK (197 aa). 12–17 contacts ATP; that stretch reads ATGKST.

It belongs to the CoaE family.

The protein resides in the cytoplasm. The catalysed reaction is 3'-dephospho-CoA + ATP = ADP + CoA + H(+). Its pathway is cofactor biosynthesis; coenzyme A biosynthesis; CoA from (R)-pantothenate: step 5/5. Catalyzes the phosphorylation of the 3'-hydroxyl group of dephosphocoenzyme A to form coenzyme A. In Listeria monocytogenes serovar 1/2a (strain ATCC BAA-679 / EGD-e), this protein is Dephospho-CoA kinase.